The primary structure comprises 325 residues: UPF0285 protein MmarC6_0247 (325 aa).

This sequence belongs to the UPF0285 family.

The protein is UPF0285 protein MmarC6_0247 of Methanococcus maripaludis (strain C6 / ATCC BAA-1332).